A 129-amino-acid polypeptide reads, in one-letter code: Histone H2B.2 (129 aa).

Over residues 1-19 (MAPKAEKKPASKAPAEKKP) the composition is skewed to basic and acidic residues. Residues 1–38 (MAPKAEKKPASKAPAEKKPAAKKTATSGTKKRSKTRKE) are disordered. 2 positions are modified to N6-acetyllysine; alternate: lysine 7 and lysine 8. Glycyl lysine isopeptide (Lys-Gly) (interchain with G-Cter in SUMO); alternate cross-links involve residues lysine 7 and lysine 8. Serine 11 carries the phosphoserine modification. Lysine 12 carries the N6-acetyllysine modification. An N6-acetyllysine; alternate modification is found at lysine 17. A Glycyl lysine isopeptide (Lys-Gly) (interchain with G-Cter in SUMO); alternate cross-link involves residue lysine 17. A Glycyl lysine isopeptide (Lys-Gly) (interchain with G-Cter in SUMO) cross-link involves residue lysine 18. A Glycyl lysine isopeptide (Lys-Gly) (interchain with G-Cter in ubiquitin) cross-link involves residue lysine 123.

This sequence belongs to the histone H2B family. As to quaternary structure, the nucleosome is a histone octamer containing two molecules each of H2A, H2B, H3 and H4 assembled in one H3-H4 heterotetramer and two H2A-H2B heterodimers. The octamer wraps approximately 147 bp of DNA. In terms of processing, monoubiquitinated by the UBC2-BRE1 complex to form H2BK123ub1. H2BK123ub1 gives a specific tag for epigenetic transcriptional activation and is also prerequisite for H3K4me and H3K79me formation. H2BK123ub1 also modulates the formation of double-strand breaks during meiosis and is a prerequisite for DNA-damage checkpoint activation. Post-translationally, phosphorylated by STE20 to form H2BS10ph during progression through meiotic prophase. May be correlated with chromosome condensation. Acetylated by GCN5 to form H2BK11ac and H2BK16ac. H2BK16ac can also be formed by ESA1. Acetylation of N-terminal lysines and particularly formation of H2BK11acK16ac has a positive effect on transcription. In terms of processing, sumoylation to form H2BK6su or H2BK7su, and probably also H2BK16su or H2BK17su, occurs preferentially near the telomeres and represses gene transcription.

Its subcellular location is the nucleus. The protein localises to the chromosome. Core component of nucleosome. Nucleosomes wrap and compact DNA into chromatin, limiting DNA accessibility to the cellular machineries which require DNA as a template. Histones thereby play a central role in transcription regulation, DNA repair, DNA replication and chromosomal stability. DNA accessibility is regulated via a complex set of post-translational modifications of histones, also called histone code, and nucleosome remodeling. In Debaryomyces hansenii (strain ATCC 36239 / CBS 767 / BCRC 21394 / JCM 1990 / NBRC 0083 / IGC 2968) (Yeast), this protein is Histone H2B.2 (HTB2).